We begin with the raw amino-acid sequence, 336 residues long: DNA-directed RNA polymerase subunit alpha (336 aa).

Residues 1–234 (MIEFVIPKKL…NHFKIVTEGL (234 aa)) are alpha N-terminal domain (alpha-NTD). The segment at 269 to 336 (VYNRKIDELE…KFGLELRKGE (68 aa)) is alpha C-terminal domain (alpha-CTD).

It belongs to the RNA polymerase alpha chain family. Homodimer. The RNAP catalytic core consists of 2 alpha, 1 beta, 1 beta' and 1 omega subunit. When a sigma factor is associated with the core the holoenzyme is formed, which can initiate transcription.

The catalysed reaction is RNA(n) + a ribonucleoside 5'-triphosphate = RNA(n+1) + diphosphate. DNA-dependent RNA polymerase catalyzes the transcription of DNA into RNA using the four ribonucleoside triphosphates as substrates. This is DNA-directed RNA polymerase subunit alpha from Thermotoga petrophila (strain ATCC BAA-488 / DSM 13995 / JCM 10881 / RKU-1).